Here is a 168-residue protein sequence, read N- to C-terminus: Large ribosomal subunit protein uL10 (168 aa).

Belongs to the universal ribosomal protein uL10 family. In terms of assembly, part of the ribosomal stalk of the 50S ribosomal subunit. The N-terminus interacts with L11 and the large rRNA to form the base of the stalk. The C-terminus forms an elongated spine to which L12 dimers bind in a sequential fashion forming a multimeric L10(L12)X complex.

In terms of biological role, forms part of the ribosomal stalk, playing a central role in the interaction of the ribosome with GTP-bound translation factors. The protein is Large ribosomal subunit protein uL10 of Acinetobacter baumannii (strain AB307-0294).